Reading from the N-terminus, the 89-residue chain is Putative regulatory protein Nther_1328 (89 aa).

This sequence belongs to the RemA family.

This Natranaerobius thermophilus (strain ATCC BAA-1301 / DSM 18059 / JW/NM-WN-LF) protein is Putative regulatory protein Nther_1328.